Reading from the N-terminus, the 493-residue chain is NADH-quinone oxidoreductase subunit N 2 (493 aa).

A run of 14 helical transmembrane segments spans residues isoleucine 16–isoleucine 36, phenylalanine 45–glutamine 65, glycine 87–serine 107, glycine 119–threonine 139, leucine 141–phenylalanine 161, leucine 176–isoleucine 196, valine 219–phenylalanine 239, leucine 258–leucine 278, tryptophan 285–isoleucine 305, leucine 313–asparagine 333, isoleucine 340–alanine 360, alanine 385–leucine 405, glycine 421–valine 441, and cysteine 464–leucine 484.

The protein belongs to the complex I subunit 2 family. In terms of assembly, NDH-1 is composed of 14 different subunits. Subunits NuoA, H, J, K, L, M, N constitute the membrane sector of the complex.

It localises to the cell inner membrane. The catalysed reaction is a quinone + NADH + 5 H(+)(in) = a quinol + NAD(+) + 4 H(+)(out). Its function is as follows. NDH-1 shuttles electrons from NADH, via FMN and iron-sulfur (Fe-S) centers, to quinones in the respiratory chain. The immediate electron acceptor for the enzyme in this species is believed to be ubiquinone. Couples the redox reaction to proton translocation (for every two electrons transferred, four hydrogen ions are translocated across the cytoplasmic membrane), and thus conserves the redox energy in a proton gradient. This chain is NADH-quinone oxidoreductase subunit N 2, found in Solibacter usitatus (strain Ellin6076).